Reading from the N-terminus, the 776-residue chain is Photosystem I P700 chlorophyll a apoprotein A1 (776 aa).

8 helical membrane-spanning segments follow: residues 76–99 (IFSA…FHGA), 162–185 (LMAL…FHYH), 201–225 (LQHH…HVAN), 309–327 (VAHH…GHVY), 368–391 (WHAQ…HHMY), 407–433 (LGLF…IAVI), 455–477 (AIIS…LYIH), and 557–575 (LMIH…LILL). Positions 599 and 608 each coordinate [4Fe-4S] cluster. 2 helical membrane passes run 615-636 (HVFL…YFSW) and 690-712 (LSGY…MFLF). A divinylchlorophyll a'-binding site is contributed by His-701. The divinyl chlorophyll a site is built by Met-709 and Tyr-717. Position 718 (Trp-718) interacts with phylloquinone. A helical transmembrane segment spans residues 750–770 (AVGVTHFLFGGIVTTWAFFHA).

The protein belongs to the PsaA/PsaB family. As to quaternary structure, the PsaA/B heterodimer binds the P700 chlorophyll special pair and subsequent electron acceptors. PSI consists of a core antenna complex that captures photons, and an electron transfer chain that converts photonic excitation into a charge separation. The cyanobacterial PSI reaction center is composed of one copy each of PsaA,B,C,D,E,F,I,J,K,L,M and X, and forms trimeric complexes. PSI electron transfer chain: 5 divinyl chlorophyll a, 1 divinyl chlorophyll a', 2 phylloquinones and 3 4Fe-4S clusters. PSI core antenna: 90 divinyl chlorophyll a, 22 carotenoids, 3 phospholipids and 1 galactolipid. P700 is a divinyl chlorophyll a/divinyl chlorophyll a' dimer, A0 is one or more chlorophyll divinyl a, A1 is one or both phylloquinones and FX is a shared 4Fe-4S iron-sulfur center. serves as cofactor.

Its subcellular location is the cellular thylakoid membrane. It carries out the reaction reduced [plastocyanin] + hnu + oxidized [2Fe-2S]-[ferredoxin] = oxidized [plastocyanin] + reduced [2Fe-2S]-[ferredoxin]. Functionally, psaA and PsaB bind P700, the primary electron donor of photosystem I (PSI), as well as the electron acceptors A0, A1 and FX. PSI is a plastocyanin/cytochrome c6-ferredoxin oxidoreductase, converting photonic excitation into a charge separation, which transfers an electron from the donor P700 chlorophyll pair to the spectroscopically characterized acceptors A0, A1, FX, FA and FB in turn. Oxidized P700 is reduced on the lumenal side of the thylakoid membrane by plastocyanin or cytochrome c6. This chain is Photosystem I P700 chlorophyll a apoprotein A1, found in Prochlorococcus marinus (strain MIT 9313).